Consider the following 162-residue polypeptide: Glutathione peroxidase-like peroxiredoxin GPX5 (162 aa).

An S-selanylcysteine modification is found at C38. N87 is a catalytic residue.

The protein belongs to the glutathione peroxidase family. In terms of processing, cys-87 is S-selanylated when selenium levels are high. S-selanylation may increase or be important for glutathione peroxidase activity.

The protein resides in the cytoplasm. It carries out the reaction 2 glutathione + H2O2 = glutathione disulfide + 2 H2O. The catalysed reaction is a hydroperoxide + [thioredoxin]-dithiol = an alcohol + [thioredoxin]-disulfide + H2O. Functionally, has thioredoxin peroxidase activity. May also have glutathione peroxidase activity, although this activity is controversial. Protects cells against reactive oxygen species, which may include photooxidative stress, hydrogen peroxide and organic hydroperoxides. The polypeptide is Glutathione peroxidase-like peroxiredoxin GPX5 (Chlamydomonas reinhardtii (Chlamydomonas smithii)).